A 142-amino-acid chain; its full sequence is Large ribosomal subunit protein uL13 (142 aa).

Belongs to the universal ribosomal protein uL13 family. In terms of assembly, part of the 50S ribosomal subunit.

Its function is as follows. This protein is one of the early assembly proteins of the 50S ribosomal subunit, although it is not seen to bind rRNA by itself. It is important during the early stages of 50S assembly. In Photorhabdus laumondii subsp. laumondii (strain DSM 15139 / CIP 105565 / TT01) (Photorhabdus luminescens subsp. laumondii), this protein is Large ribosomal subunit protein uL13.